The following is a 124-amino-acid chain: Splicing factor 3B subunit 6-like protein (124 aa).

The tract at residues 16-29 is interaction with pre-mRNA branch site; the sequence is EVNRVLYVRNLPFN. One can recognise an RRM domain in the interval 19–94; sequence RVLYVRNLPF…RYLIVLYYQH (76 aa).

The protein resides in the nucleus. Functionally, may be necessary for the splicing of pre-mRNA. The chain is Splicing factor 3B subunit 6-like protein from Arabidopsis thaliana (Mouse-ear cress).